A 306-amino-acid polypeptide reads, in one-letter code: GTP cyclohydrolase FolE2 (306 aa).

This sequence belongs to the GTP cyclohydrolase IV family.

The catalysed reaction is GTP + H2O = 7,8-dihydroneopterin 3'-triphosphate + formate + H(+). It participates in cofactor biosynthesis; 7,8-dihydroneopterin triphosphate biosynthesis; 7,8-dihydroneopterin triphosphate from GTP: step 1/1. In terms of biological role, converts GTP to 7,8-dihydroneopterin triphosphate. The protein is GTP cyclohydrolase FolE2 of Xanthomonas oryzae pv. oryzae (strain MAFF 311018).